Reading from the N-terminus, the 298-residue chain is Rhodomycin D methylesterase DauP (298 aa).

In terms of domain architecture, AB hydrolase-1 spans 25-277; sequence PLLLIAGGNL…VEIENMGHAL (253 aa).

The protein belongs to the methyl esterase DnrP family.

It catalyses the reaction rhodomycin D + H2O = 10-carboxy-13-deoxycarminomycin + methanol + H(+). The enzyme catalyses 4-O-methylrhodomycin D + H2O = 10-carboxy-13-deoxydaunorubicin + methanol + H(+). It participates in antibiotic biosynthesis; daunorubicin biosynthesis. It functions in the pathway antibiotic biosynthesis; carminomycin biosynthesis. Its function is as follows. Involved in the biosynthesis of the anthracyclines carminomycin and daunorubicin (daunomycin) which are aromatic polyketide antibiotics that exhibit high cytotoxicity and are widely applied in the chemotherapy of a variety of cancers. Catalyzes the removal of methyl group from the carbomethoxy group of rhodomycin D (10-carbomethoxy-13-deoxycarminomycin) and 4-O-methylrhodomycin D to yield 10-carboxy-13-deoxycarminomycin and 10-carboxy-13-deoxydaunorubicin, respectively. Could be also involved in the decarboxylation of 10-carboxy-13-deoxycarminomycin and 10-carboxy-13-deoxydaunorubicin to yield 13-deoxycarminomycin and 13-deoxydaunorubicin, respectively. It seems that DauK may influence the ability of DauP to carry out the decarboxylation. This is Rhodomycin D methylesterase DauP (dauP) from Streptomyces sp. (strain C5).